The following is a 609-amino-acid chain: Phosphoenolpyruvate carboxykinase [GTP] (609 aa).

Residues Arg81 and 220–222 (YGG) each bind substrate. Positions 229 and 249 each coordinate Mn(2+). Ser271 contacts substrate. Residue 272 to 277 (ACGKTN) participates in GTP binding. Cys273 is a catalytic residue. Asp296 contributes to the Mn(2+) binding site. 387 to 389 (NSR) is a binding site for substrate. GTP is bound by residues Arg389, Arg420, and 515–518 (FGEN).

The protein belongs to the phosphoenolpyruvate carboxykinase [GTP] family. Monomer. The cofactor is Mn(2+).

The protein localises to the cytoplasm. It catalyses the reaction oxaloacetate + GTP = phosphoenolpyruvate + GDP + CO2. It functions in the pathway carbohydrate biosynthesis; gluconeogenesis. In terms of biological role, catalyzes the conversion of oxaloacetate (OAA) to phosphoenolpyruvate (PEP), the rate-limiting step in the metabolic pathway that produces glucose from lactate and other precursors derived from the citric acid cycle. This chain is Phosphoenolpyruvate carboxykinase [GTP], found in Mycobacterium marinum (strain ATCC BAA-535 / M).